We begin with the raw amino-acid sequence, 155 residues long: Ribonuclease H (155 aa).

The region spanning 1 to 142 (MLKQVEIFTD…CDVLARDAAS (142 aa)) is the RNase H type-1 domain. Mg(2+) contacts are provided by aspartate 10, glutamate 48, aspartate 70, and aspartate 134.

Belongs to the RNase H family. As to quaternary structure, monomer. Mg(2+) is required as a cofactor.

Its subcellular location is the cytoplasm. It catalyses the reaction Endonucleolytic cleavage to 5'-phosphomonoester.. Endonuclease that specifically degrades the RNA of RNA-DNA hybrids. This is Ribonuclease H from Serratia proteamaculans (strain 568).